Reading from the N-terminus, the 249-residue chain is Long form salivary protein D7L (249 aa).

Positions 1-19 (MNAVITSLVFISLVGVGYS) are cleaved as a signal peptide. 2 disulfides stabilise this stretch: Cys36–Cys66 and Cys62–Cys112. Residue Trp49 coordinates thromboxane A2. Trp52 provides a ligand contact to leukotriene C4. Thromboxane A2 is bound at residue Tyr63. Gly136 and Lys154 together coordinate leukotriene C4. Lys154 serves as a coordination point for thromboxane A2. 3 disulfide bridges follow: Cys162/Cys178, Cys174/Cys221, and Cys211/Cys230.

This sequence belongs to the PBP/GOBP family.

The protein resides in the secreted. In terms of biological role, modulates blood feeding of female sandflies on vertebrate species by binding and sequestering different mediators involved in the host response. Binds leukotriene C4, leukotriene D4, leukotriene E4 and U-46619, a stable analog of thromboxane A2. Does not bind histamine or serotonin. Inhibits platelet aggregation induced by low concentrations of collagen in thromboxane A2-dependent manner. In Phlebotomus duboscqi (Sandfly), this protein is Long form salivary protein D7L.